Here is a 737-residue protein sequence, read N- to C-terminus: Polyribonucleotide nucleotidyltransferase (737 aa).

The Mg(2+) site is built by aspartate 489 and aspartate 495. Positions 556–615 (PKIDTIKIDVDKIKIVIGKGGETIDKIIAETGVKIDIDEEGNVSIYSSDQDAINRAKEII) constitute a KH domain. Residues 625 to 693 (DEVYRAKVVR…EKGRIDASMK (69 aa)) form the S1 motif domain. The segment at 691–737 (SMKALLPRPPKPEHDEKGEKSERPHRPRHHKDHKPKKEFTETPKDSE) is disordered. A compositionally biased stretch (basic and acidic residues) spans 700 to 714 (PKPEHDEKGEKSERP). The span at 715-724 (HRPRHHKDHK) shows a compositional bias: basic residues. Residues 725–737 (PKKEFTETPKDSE) are compositionally biased toward basic and acidic residues.

This sequence belongs to the polyribonucleotide nucleotidyltransferase family. It depends on Mg(2+) as a cofactor.

The protein localises to the cytoplasm. The enzyme catalyses RNA(n+1) + phosphate = RNA(n) + a ribonucleoside 5'-diphosphate. Involved in mRNA degradation. Catalyzes the phosphorolysis of single-stranded polyribonucleotides processively in the 3'- to 5'-direction. This is Polyribonucleotide nucleotidyltransferase from Streptococcus pneumoniae (strain ATCC 700669 / Spain 23F-1).